Consider the following 367-residue polypeptide: Alpha-2-HS-glycoprotein (367 aa).

The N-terminal stretch at 1–18 (MKSLVLLLCLAQLWGCHS) is a signal peptide. One can recognise a Cystatin fetuin-A-type 1 domain in the interval 27–133 (YRQPNCDDPE…KFSVVYAKCD (107 aa)). Disulfide bonds link Cys-32/Cys-358, Cys-89/Cys-100, Cys-114/Cys-132, Cys-146/Cys-149, Cys-208/Cys-219, and Cys-230/Cys-247. Ser-134, Ser-135, and Ser-138 each carry phosphoserine. One can recognise a Cystatin fetuin-A-type 2 domain in the interval 144–255 (KVCQDCPLLA…TCTVFQTQPV (112 aa)). 2 N-linked (GlcNAc...) asparagine glycosylation sites follow: Asn-156 and Asn-176. Residues 254–301 (PVTSQPQPEGANETVPTPVVDPDAPPSPPLGAPGLPPAGSPPDSHVLL) are disordered. Residue Asn-265 is glycosylated (N-linked (GlcNAc...) asparagine). The span at 276 to 293 (DAPPSPPLGAPGLPPAGS) shows a compositional bias: pro residues. The propeptide at 301-340 (LAAPPGHQLHWAHYDLRHTFMGVVSLGSPSGEASHPRKTR) is connecting peptide. Thr-319 is subject to Phosphothreonine. 3 positions are modified to phosphoserine: Ser-325, Ser-328, and Ser-330. O-linked (GalNAc...) threonine glycosylation is present at Thr-339.

It belongs to the fetuin family. In terms of assembly, alpha-2-HS glycoprotein derives from this precursor, when the connecting peptide is cleaved off. The two chains A and B are held together by a single disulfide bond. Phosphorylated by FAM20C in the extracellular medium.

It localises to the secreted. In terms of biological role, promotes endocytosis, possesses opsonic properties and influences the mineral phase of bone. Shows affinity for calcium and barium ions. The sequence is that of Alpha-2-HS-glycoprotein (AHSG) from Pan troglodytes (Chimpanzee).